A 185-amino-acid chain; its full sequence is Ribosome maturation factor RimM (185 aa).

The 80-residue stretch at 106–185 (EGDYYWKDLM…SIEVDWDPGF (80 aa)) folds into the PRC barrel domain.

This sequence belongs to the RimM family. As to quaternary structure, binds ribosomal protein uS19.

It localises to the cytoplasm. An accessory protein needed during the final step in the assembly of 30S ribosomal subunit, possibly for assembly of the head region. Essential for efficient processing of 16S rRNA. May be needed both before and after RbfA during the maturation of 16S rRNA. It has affinity for free ribosomal 30S subunits but not for 70S ribosomes. The protein is Ribosome maturation factor RimM of Shigella dysenteriae serotype 1 (strain Sd197).